The chain runs to 241 residues: Major microneme antigen (241 aa).

The N-terminal stretch at 1-34 (MTLPIHFPRCVLYGMASAVWSILFLHILVGDTMS) is a signal peptide. Positions 35–103 (AADALSWSGG…ATGRGPSFVH (69 aa)) are excised as a propeptide. Positions 64–83 (GKELEQQHGGEEQQMQRDTK) are enriched in basic and acidic residues. Positions 64 to 90 (GKELEQQHGGEEQQMQRDTKPAAFSNP) are disordered. PAN domains are found at residues 112-181 (CFPH…PRSC) and 185-241 (CTDN…VERA). Intrachain disulfides connect Cys-112–Cys-181, Cys-137–Cys-159, Cys-141–Cys-147, Cys-185–Cys-189, Cys-210–Cys-230, and Cys-214–Cys-220. Ser-121 contacts a carbohydrate. A carbohydrate contacts are provided by Lys-162, Tyr-169, and Asp-174.

It belongs to the microneme antigen family. As to quaternary structure, homodimer or heterodimer of major microneme antigen and microneme antigen. Post-translationally, contains six disulfide bonds.

Its subcellular location is the cytoplasmic vesicle. The protein resides in the secretory vesicle. The protein localises to the microneme. In terms of biological role, galactose-binding lectin. Plays a role in adhesion to the host cell. Has a potential role in invasion of host cells. This chain is Major microneme antigen, found in Sarcocystis muris.